The primary structure comprises 807 residues: Mechanosensitive cation channel TMEM63A (807 aa).

Topologically, residues methionine 1–proline 51 are extracellular. An N-linked (GlcNAc...) asparagine glycan is attached at asparagine 38. A helical membrane pass occupies residues threonine 52 to arginine 74. At phenylalanine 75–glutamate 134 the chain is on the cytoplasmic side. A helical transmembrane segment spans residues aspartate 135–serine 167. Topologically, residues glycine 168 to aspartate 191 are extracellular. Residues leucine 192–serine 217 form a helical membrane-spanning segment. Residues isoleucine 218–leucine 416 lie on the Cytoplasmic side of the membrane. The segment at lysine 219–glutamine 414 is intracellular linker IL2; confers mechanosensitivity. The helical transmembrane segment at arginine 417–serine 444 threads the bilayer. Residues threonine 445–isoleucine 462 lie on the Extracellular side of the membrane. The N-linked (GlcNAc...) asparagine glycan is linked to asparagine 450. Residues isoleucine 463 to glutamate 490 traverse the membrane as a helical segment. Over serine 491–lysine 495 the chain is Cytoplasmic. A helical transmembrane segment spans residues serine 496–leucine 532. Residues phenylalanine 533–alanine 554 lie on the Extracellular side of the membrane. Residues phenylalanine 555–isoleucine 586 traverse the membrane as a helical segment. Residues phenylalanine 555 to isoleucine 586 are gating helix. Topologically, residues methionine 587 to glutamate 606 are cytoplasmic. A helical membrane pass occupies residues phenylalanine 607–tyrosine 624. The Extracellular segment spans residues serine 625–cysteine 628. The chain crosses the membrane as a helical span at residues proline 629 to tyrosine 651. Residues phenylalanine 652–lysine 661 lie on the Cytoplasmic side of the membrane. The helical transmembrane segment at glycine 662 to arginine 689 threads the bilayer. Residues leucine 690–alanine 694 are Extracellular-facing. The chain crosses the membrane as a helical span at residues proline 695–leucine 709. The Cytoplasmic portion of the chain corresponds to valine 710–alanine 807. Serine 739 is modified (phosphoserine).

It belongs to the CSC1 (TC 1.A.17) family. In terms of assembly, monomer. N-Glycosylated.

The protein resides in the lysosome membrane. The protein localises to the early endosome membrane. Its subcellular location is the cell membrane. It catalyses the reaction Ca(2+)(in) = Ca(2+)(out). Mechanosensitive cation channel with low conductance and high activation threshold. In contrast to TMEM63B, does not show phospholipid scramblase activity. Acts as a regulator of lysosomal morphology by mediating lysosomal mechanosensitivity. Important for the baby's first breath and respiration throughout life. Upon lung inflation conducts cation currents in alveolar type 1 and 2 cells triggering lamellar body exocytosis and surfactant secretion into airspace. Also acts as an osmosensitive cation channel preferentially activated by hypotonic stress. The protein is Mechanosensitive cation channel TMEM63A of Homo sapiens (Human).